Reading from the N-terminus, the 402-residue chain is tRNA(Met) cytidine acetate ligase (402 aa).

Residues 7–20 (ITEYNPFHLGHELH), Gly102, Asn171, and Arg196 contribute to the ATP site.

Belongs to the TmcAL family.

Its subcellular location is the cytoplasm. It carries out the reaction cytidine(34) in elongator tRNA(Met) + acetate + ATP = N(4)-acetylcytidine(34) in elongator tRNA(Met) + AMP + diphosphate. Functionally, catalyzes the formation of N(4)-acetylcytidine (ac(4)C) at the wobble position of elongator tRNA(Met), using acetate and ATP as substrates. First activates an acetate ion to form acetyladenylate (Ac-AMP) and then transfers the acetyl group to tRNA to form ac(4)C34. In Clostridium perfringens (strain SM101 / Type A), this protein is tRNA(Met) cytidine acetate ligase.